Reading from the N-terminus, the 212-residue chain is Peptide methionine sulfoxide reductase MsrA (212 aa).

Residue C52 is part of the active site.

The protein belongs to the MsrA Met sulfoxide reductase family.

It catalyses the reaction L-methionyl-[protein] + [thioredoxin]-disulfide + H2O = L-methionyl-(S)-S-oxide-[protein] + [thioredoxin]-dithiol. The enzyme catalyses [thioredoxin]-disulfide + L-methionine + H2O = L-methionine (S)-S-oxide + [thioredoxin]-dithiol. In terms of biological role, has an important function as a repair enzyme for proteins that have been inactivated by oxidation. Catalyzes the reversible oxidation-reduction of methionine sulfoxide in proteins to methionine. The chain is Peptide methionine sulfoxide reductase MsrA from Salmonella paratyphi A (strain AKU_12601).